Here is a 342-residue protein sequence, read N- to C-terminus: L-threonine 3-dehydrogenase (342 aa).

C38 provides a ligand contact to Zn(2+). Active-site charge relay system residues include T40 and H43. Residues H63, E64, C93, C96, C99, and C107 each contribute to the Zn(2+) site. NAD(+) is bound by residues I175, D195, R200, 262–264, and 286–287; these read LGI and IY.

This sequence belongs to the zinc-containing alcohol dehydrogenase family. As to quaternary structure, homotetramer. Requires Zn(2+) as cofactor.

Its subcellular location is the cytoplasm. It catalyses the reaction L-threonine + NAD(+) = (2S)-2-amino-3-oxobutanoate + NADH + H(+). It participates in amino-acid degradation; L-threonine degradation via oxydo-reductase pathway; glycine from L-threonine: step 1/2. In terms of biological role, catalyzes the NAD(+)-dependent oxidation of L-threonine to 2-amino-3-ketobutyrate. The sequence is that of L-threonine 3-dehydrogenase from Burkholderia ambifaria (strain MC40-6).